Reading from the N-terminus, the 381-residue chain is Nitric oxide reductase FlRd-NAD(+) reductase (381 aa).

It belongs to the FAD-dependent oxidoreductase family. Requires FAD as cofactor.

The protein resides in the cytoplasm. The catalysed reaction is 2 reduced [nitric oxide reductase rubredoxin domain] + NAD(+) + H(+) = 2 oxidized [nitric oxide reductase rubredoxin domain] + NADH. The protein operates within nitrogen metabolism; nitric oxide reduction. In terms of biological role, one of at least two accessory proteins for anaerobic nitric oxide (NO) reductase. Reduces the rubredoxin moiety of NO reductase. The sequence is that of Nitric oxide reductase FlRd-NAD(+) reductase from Aliivibrio fischeri (strain ATCC 700601 / ES114) (Vibrio fischeri).